The following is an 86-amino-acid chain: MSLLARLFGEKKKTAEIAKNRLSLLIAHERSGGAGTADFLPALQKDLIDVISKYVNVNPDDIKVQLDKQDNVEVLEVNIVLPEHGR.

The protein belongs to the MinE family.

Prevents the cell division inhibition by proteins MinC and MinD at internal division sites while permitting inhibition at polar sites. This ensures cell division at the proper site by restricting the formation of a division septum at the midpoint of the long axis of the cell. In Azoarcus sp. (strain BH72), this protein is Cell division topological specificity factor.